Consider the following 130-residue polypeptide: Small ribosomal subunit protein uS9 (130 aa).

This sequence belongs to the universal ribosomal protein uS9 family.

The chain is Small ribosomal subunit protein uS9 from Shewanella baltica (strain OS155 / ATCC BAA-1091).